We begin with the raw amino-acid sequence, 397 residues long: Riboflavin biosynthesis protein RibBA (397 aa).

The interval 1–199 is DHBP synthase; the sequence is MFHRIEEALE…IEDLIAYRRH (199 aa). D-ribulose 5-phosphate contacts are provided by residues 26–27, Asp31, 138–142, and Glu162; these read RE and RAGHT. A Mg(2+)-binding site is contributed by Glu27. His141 serves as a coordination point for Mg(2+). A GTP cyclohydrolase II region spans residues 200 to 397; the sequence is HETLVTREVE…ASKLGHLLNL (198 aa). GTP is bound at residue 250–254; sequence RVHSE. Residues Cys255, Cys266, and Cys268 each coordinate Zn(2+). GTP-binding positions include Gln271, 293–295, and Thr315; that span reads EGR. Catalysis depends on Asp327, which acts as the Proton acceptor; for GTP cyclohydrolase activity. Arg329 (nucleophile; for GTP cyclohydrolase activity) is an active-site residue. The GTP site is built by Thr350 and Lys355.

In the N-terminal section; belongs to the DHBP synthase family. This sequence in the C-terminal section; belongs to the GTP cyclohydrolase II family. The cofactor is Mg(2+). Requires Mn(2+) as cofactor. Zn(2+) serves as cofactor.

The enzyme catalyses D-ribulose 5-phosphate = (2S)-2-hydroxy-3-oxobutyl phosphate + formate + H(+). The catalysed reaction is GTP + 4 H2O = 2,5-diamino-6-hydroxy-4-(5-phosphoribosylamino)-pyrimidine + formate + 2 phosphate + 3 H(+). Its pathway is cofactor biosynthesis; riboflavin biosynthesis; 2-hydroxy-3-oxobutyl phosphate from D-ribulose 5-phosphate: step 1/1. The protein operates within cofactor biosynthesis; riboflavin biosynthesis; 5-amino-6-(D-ribitylamino)uracil from GTP: step 1/4. In terms of biological role, catalyzes the conversion of D-ribulose 5-phosphate to formate and 3,4-dihydroxy-2-butanone 4-phosphate. Its function is as follows. Catalyzes the conversion of GTP to 2,5-diamino-6-ribosylamino-4(3H)-pyrimidinone 5'-phosphate (DARP), formate and pyrophosphate. The protein is Riboflavin biosynthesis protein RibBA of Bacillus mycoides (strain KBAB4) (Bacillus weihenstephanensis).